The sequence spans 1235 residues: Gem-associated protein 5 (1235 aa).

Residues 55–102 form a WD 1 repeat; it reads STRINILALDVSPMWGLGNGGPTKPFAIVGDDLSVQVWDCALGEAVIG. The interval 227–263 is disordered; that stretch reads NNLALSAEEWRSRNGGQEEKPKTKPPPLTKSKAAESD. A compositionally biased stretch (basic and acidic residues) spans 234 to 248; that stretch reads EEWRSRNGGQEEKPK. Phosphoserine is present on residues serine 289, serine 290, serine 351, and serine 354. The tract at residues 340–368 is disordered; the sequence is DCEPTKPTGPLSDASTISNKNDASDSTEG. The segment covering 352 to 368 has biased composition (polar residues); sequence DASTISNKNDASDSTEG. Threonine 355 carries the post-translational modification Phosphothreonine. Serine 357 is modified (phosphoserine). A Phosphothreonine modification is found at threonine 411. WD repeat units follow at residues 428–469, 475–512, 565–605, 611–650, 690–730, 739–779, and 788–828; these read ISAE…HAGK, KTAGKLNNVYWLNNHVIVSLSRHQLFFWSVEFERKMLR, TVAF…TSCL, YVSSNVYCLAWSPNCLELAFGTFDGTVGILDVERMKVKTH, TIVN…EKSW, LFAR…RNWK, and TEKA…KPPL. An LXXLL motif motif is present at residues 443–447; it reads LETLL. Residues 963-980 show a composition bias toward basic and acidic residues; that stretch reads KEQNNRSAKECPKCKEQS. The segment at 963 to 983 is disordered; the sequence is KEQNNRSAKECPKCKEQSPDS.

As to quaternary structure, component of the core survival motor neuron (SMN) complex composed of Smn, Gem2, Gem3, rig/Gem5 and one of 3 almost identical Gem4 paralogs encoded by Glos/Gem4a, Gem4b or Gem4c. Interacts with nuclear receptors EcR, svp (seven up), usp (ultraspiracle), Hr39 and Hr3. As to expression, expressed in the brain and salivary glands of early and late second instar larvae. Expressed in nurse cells and oocytes.

It is found in the nucleus. Its subcellular location is the cytoplasm. It localises to the U-body. The protein localises to the gem. In terms of biological role, component of the survival motor neuron (SMN) complex that catalyzes the assembly of small nuclear ribonucleoproteins (snRNPs), the building blocks of the spliceosome, and thereby plays an important role in the splicing of cellular pre-mRNAs. Nuclear receptor cofactor for the ecdysone-regulated processes of molting and puparium formation. Acts downstream from ecdysone biosynthesis and release to control the expression of specific ecdysone-regulated genes such as Eip74EF (E74). Essential in muscle and neuronal tissues for motor function, including climbing ability and flight. The sequence is that of Gem-associated protein 5 from Drosophila melanogaster (Fruit fly).